Consider the following 148-residue polypeptide: Large ribosomal subunit protein bL9 (148 aa).

The protein belongs to the bacterial ribosomal protein bL9 family.

In terms of biological role, binds to the 23S rRNA. The polypeptide is Large ribosomal subunit protein bL9 (Pseudomonas fluorescens (strain SBW25)).